A 647-amino-acid polypeptide reads, in one-letter code: RalBP1-associated Eps domain-containing protein 2 (647 aa).

The 102-residue stretch at Glu21 to Pro122 folds into the EH 1 domain. Residues Glu156 to Pro233 form a disordered region. Positions Asn158–Glu170 are enriched in basic and acidic residues. The span at Pro221–Gly230 shows a compositional bias: low complexity. Ser239 carries the post-translational modification Phosphoserine. Residues Gln268–Phe359 form the EH 2 domain. The region spanning Leu301–Arg336 is the EF-hand domain. The Ca(2+) site is built by Asp314, Asp316, Asp318, and Glu325. Positions Pro402–Ala478 are disordered. Thr466 carries the post-translational modification Phosphothreonine. Residue Ser480 is modified to Phosphoserine. The segment at Pro492–Glu568 is disordered. Positions Leu499–Cys510 are enriched in pro residues. The segment at Pro501–Leu647 is interaction with RALBP1. The span at Ser524–Thr539 shows a compositional bias: polar residues. The segment at Pro548–Leu647 is interaction with ASAP1. A coiled-coil region spans residues Ile599 to Gln640.

In terms of assembly, interacts with EPN1. Interacts with EPS15 AND EPS15L1. Interacts with RALBP1; can form a ternary complex with activated Ral (RALA or RALB). Interacts with ASAP1; the interaction is direct and this complex can bind paxillin. Also forms a ternary complex with RALBP1 and ASAP1. Interacts with GRB2. In terms of processing, tyrosine-phosphorylated upon stimulation of cells with EGF. Phosphorylation on Tyr-residues induces its association with the EGF receptor probably indirectly through an adapter like GRB2.

The protein resides in the cytoplasm. Its function is as follows. Involved in ligand-dependent receptor mediated endocytosis of the EGF and insulin receptors as part of the Ral signaling pathway. By controlling growth factor receptors endocytosis may regulate cell survival. Through ASAP1 may regulate cell adhesion and migration. This chain is RalBP1-associated Eps domain-containing protein 2 (Reps2), found in Mus musculus (Mouse).